A 118-amino-acid chain; its full sequence is Small ribosomal subunit protein uS13 (118 aa).

The tract at residues 94–118 is disordered; it reads SLPVRGQRTKTNARTRKGPRKPIKK.

It belongs to the universal ribosomal protein uS13 family. In terms of assembly, part of the 30S ribosomal subunit. Forms a loose heterodimer with protein S19. Forms two bridges to the 50S subunit in the 70S ribosome.

Its function is as follows. Located at the top of the head of the 30S subunit, it contacts several helices of the 16S rRNA. In the 70S ribosome it contacts the 23S rRNA (bridge B1a) and protein L5 of the 50S subunit (bridge B1b), connecting the 2 subunits; these bridges are implicated in subunit movement. Contacts the tRNAs in the A and P-sites. This is Small ribosomal subunit protein uS13 from Haemophilus influenzae (strain 86-028NP).